The chain runs to 93 residues: YcgL domain-containing protein VSAL_I1068 (93 aa).

The YcgL domain occupies 1-84 (MYCSIYKSSK…PPENLLEKYK (84 aa)).

The sequence is that of YcgL domain-containing protein VSAL_I1068 from Aliivibrio salmonicida (strain LFI1238) (Vibrio salmonicida (strain LFI1238)).